The chain runs to 98 residues: MSLTYMNMFMAFTISLLGLLLYRSHMMSSLLCLEGMMLSLFVMMTMIILNTHLTLASMIPIILLVFAACEAALGLSLLVMVSTTYGMDYVQNLNLLQC.

Transmembrane regions (helical) follow at residues 1–21 (MSLT…GLLL), 29–49 (SLLC…MIIL), and 61–81 (IILL…LVMV).

It belongs to the complex I subunit 4L family. In terms of assembly, core subunit of respiratory chain NADH dehydrogenase (Complex I) which is composed of 45 different subunits.

It localises to the mitochondrion inner membrane. It catalyses the reaction a ubiquinone + NADH + 5 H(+)(in) = a ubiquinol + NAD(+) + 4 H(+)(out). Functionally, core subunit of the mitochondrial membrane respiratory chain NADH dehydrogenase (Complex I) which catalyzes electron transfer from NADH through the respiratory chain, using ubiquinone as an electron acceptor. Part of the enzyme membrane arm which is embedded in the lipid bilayer and involved in proton translocation. In Platyrrhinus brachycephalus (Short-headed broad-nosed bat), this protein is NADH-ubiquinone oxidoreductase chain 4L (MT-ND4L).